A 279-amino-acid chain; its full sequence is Tryptophan synthase alpha chain (279 aa).

Catalysis depends on proton acceptor residues E50 and D61.

This sequence belongs to the TrpA family. Tetramer of two alpha and two beta chains.

It catalyses the reaction (1S,2R)-1-C-(indol-3-yl)glycerol 3-phosphate + L-serine = D-glyceraldehyde 3-phosphate + L-tryptophan + H2O. It participates in amino-acid biosynthesis; L-tryptophan biosynthesis; L-tryptophan from chorismate: step 5/5. The alpha subunit is responsible for the aldol cleavage of indoleglycerol phosphate to indole and glyceraldehyde 3-phosphate. This chain is Tryptophan synthase alpha chain, found in Azorhizobium caulinodans (strain ATCC 43989 / DSM 5975 / JCM 20966 / LMG 6465 / NBRC 14845 / NCIMB 13405 / ORS 571).